A 333-amino-acid chain; its full sequence is Holliday junction branch migration complex subunit RuvB (333 aa).

Residues 1 to 182 (MDERLLSGES…FGVLSRLEYY (182 aa)) are large ATPase domain (RuvB-L). Residues Leu-21, Arg-22, Gly-63, Lys-66, Thr-67, Thr-68, 129–131 (EDF), Arg-172, Tyr-182, and Arg-219 each bind ATP. Thr-67 serves as a coordination point for Mg(2+). Residues 183–253 (TVDQLSEIVE…ITQMALELLQ (71 aa)) form a small ATPAse domain (RuvB-S) region. Residues 256–333 (KLGLDHIDHK…EHFGMEMPKV (78 aa)) are head domain (RuvB-H). 2 residues coordinate DNA: Arg-311 and Arg-316.

This sequence belongs to the RuvB family. Homohexamer. Forms an RuvA(8)-RuvB(12)-Holliday junction (HJ) complex. HJ DNA is sandwiched between 2 RuvA tetramers; dsDNA enters through RuvA and exits via RuvB. An RuvB hexamer assembles on each DNA strand where it exits the tetramer. Each RuvB hexamer is contacted by two RuvA subunits (via domain III) on 2 adjacent RuvB subunits; this complex drives branch migration. In the full resolvosome a probable DNA-RuvA(4)-RuvB(12)-RuvC(2) complex forms which resolves the HJ.

It is found in the cytoplasm. It catalyses the reaction ATP + H2O = ADP + phosphate + H(+). In terms of biological role, the RuvA-RuvB-RuvC complex processes Holliday junction (HJ) DNA during genetic recombination and DNA repair, while the RuvA-RuvB complex plays an important role in the rescue of blocked DNA replication forks via replication fork reversal (RFR). RuvA specifically binds to HJ cruciform DNA, conferring on it an open structure. The RuvB hexamer acts as an ATP-dependent pump, pulling dsDNA into and through the RuvAB complex. RuvB forms 2 homohexamers on either side of HJ DNA bound by 1 or 2 RuvA tetramers; 4 subunits per hexamer contact DNA at a time. Coordinated motions by a converter formed by DNA-disengaged RuvB subunits stimulates ATP hydrolysis and nucleotide exchange. Immobilization of the converter enables RuvB to convert the ATP-contained energy into a lever motion, pulling 2 nucleotides of DNA out of the RuvA tetramer per ATP hydrolyzed, thus driving DNA branch migration. The RuvB motors rotate together with the DNA substrate, which together with the progressing nucleotide cycle form the mechanistic basis for DNA recombination by continuous HJ branch migration. Branch migration allows RuvC to scan DNA until it finds its consensus sequence, where it cleaves and resolves cruciform DNA. This chain is Holliday junction branch migration complex subunit RuvB, found in Bacillus cereus (strain ATCC 10987 / NRS 248).